We begin with the raw amino-acid sequence, 146 residues long: Hemoglobin subunit beta (146 aa).

V1 carries the post-translational modification N-acetylvaline; partial. A Globin domain is found at 2–146 (HLTDAEKAAV…VANALAHKYH (145 aa)). Phosphothreonine is present on T12. The residue at position 59 (K59) is an N6-acetyllysine. Heme b is bound at residue H63. K82 is subject to N6-acetyllysine. H92 provides a ligand contact to heme b. An S-nitrosocysteine modification is found at C93. N6-acetyllysine is present on K144.

It belongs to the globin family. As to quaternary structure, heterotetramer of two alpha chains and two beta chains. Red blood cells.

Functionally, involved in oxygen transport from the lung to the various peripheral tissues. The protein is Hemoglobin subunit beta (HBB) of Procavia capensis habessinica (Abyssinian hyrax).